The primary structure comprises 292 residues: High-affinity heme uptake system protein IsdE (292 aa).

Residues 1-19 form the signal peptide; the sequence is MRIIKYLTILVISVVILTS. Cys-20 carries the N-palmitoyl cysteine lipid modification. Cys-20 is lipidated: S-diacylglycerol cysteine. A Fe/B12 periplasmic-binding domain is found at 35-291; the sequence is RIVPTTVALT…QLYDLFYKDK (257 aa). Val-41, Ala-42, Ser-60, Tyr-61, Met-78, and His-229 together coordinate heme.

The protein belongs to the bacterial solute-binding protein 8 family. The cofactor is heme b.

The protein localises to the cell membrane. Involved in heme (porphyrin) scavenging. Binds Fe(2+) and Fe(3+) heme but the largest fraction is Fe(2+) heme. Functions as a high-affinity heme binding protein and probably has a role in relaying heme-iron from cell wall-anchored isd proteins receptors to the probable permease IsdF. The sequence is that of High-affinity heme uptake system protein IsdE (isdE) from Staphylococcus aureus (strain Mu3 / ATCC 700698).